Consider the following 1702-residue polypeptide: Dicer-like protein 4 (1702 aa).

Disordered stretches follow at residues 1–52 and 89–120; these read MRDE…SAAT and SSSS…EKDP. Residues 17-31 show a composition bias toward basic and acidic residues; it reads GKRDREQKNCEEEKN. The segment covering 89–105 has biased composition (low complexity); it reads SSSSVSSFSSSSSSLFS. A Helicase ATP-binding domain is found at 131-307; sequence LCKKATEENV…SENLSKSINS (177 aa). An ATP-binding site is contributed by 144–151; sequence LGTGCGKT. A DECH box motif is present at residues 251-254; it reads DECH. Residues 475–629 enclose the Helicase C-terminal domain; the sequence is QLIKILSVFR…RMNLEITYRS (155 aa). Residues 656 to 748 form the Dicer dsRNA-binding fold domain; sequence SISLLYKYCS…LPDSKDEIED (93 aa). In terms of domain architecture, PAZ spans 932–1054; that stretch reads LVEDIFPPSG…IPPELSHLKI (123 aa). 2 consecutive RNase III domains span residues 1083–1251 and 1292–1436; these read ELKH…VDSG and LETL…LDCG. Mg(2+) is bound by residues E1330, D1422, and E1425. 2 DRBM domains span residues 1462 to 1528 and 1621 to 1697; these read SPIK…NLKA and TAKS…CLKH.

Belongs to the helicase family. Dicer subfamily. As to quaternary structure, interacts with DRB4. The cofactor is Mg(2+). Requires Mn(2+) as cofactor.

The protein localises to the nucleus. Functionally, ribonuclease (RNase) III involved in RNA-mediated post-transcriptional gene silencing (PTGS). Functions in the biogenesis of trans-acting small interfering RNAs (ta-siRNAs, derived from the TAS1, TAS2 or TAS3 endogenous transcripts) by cleaving small dsRNAs into 21-24 nucleotide ta-siRNAs. Functions with the dsRNA-binding protein DRB4 in ta-siRNAs processing. Acts in the RDR6/SGS3/DCL4/AGO7 ta-siRNA pathway involved in leaf developmental timing. Plays a role in transitive silencing of transgenes by processing secondary siRNAs. This pathway, which requires DCL2 and RDR6, amplifies silencing by using the target RNA as substrate to generate secondary siRNAs, providing an efficient mechanism for long-distance silencing. Required for the production of the 30-40 nucleotide bacterial-induced long siRNAs (lsiRNA). May participate with DCL3 in the production of 24 nucleotide repeat-associated siRNAs (ra-siRNAs) which derive from heterochromatin and DNA repeats such as transposons. Plays an important role in antiviral RNA silencing. Involved in the production of viral siRNAs derived from the cucumber mosaic virus (CMV), turnip crinkle virus (TCV) and tobacco rattle virus (TRV). Targeted by the viral silencing suppressor (VSR) protein 2b of the cucumber mosaic virus (CMV) that inactivates DCL4 function in RNA silencing. Does not seem to be involved in microRNAs (miRNAs) processing. This chain is Dicer-like protein 4 (DCL4), found in Arabidopsis thaliana (Mouse-ear cress).